The sequence spans 304 residues: Transmembrane protein 178A (304 aa).

An N-terminal signal peptide occupies residues 1 to 25; it reads MESRGLVTAVSLTLSICSLLLLVTA. Residues 26–186 are Extracellular-facing; that stretch reads IFTDHWYETD…LLHLRRITAG (161 aa). Asparagine 165 carries N-linked (GlcNAc...) asparagine glycosylation. Residues 187–207 traverse the membrane as a helical segment; it reads FLGMAAAVLLCGCIVAAISFF. Residues 208–215 lie on the Cytoplasmic side of the membrane; sequence WEESLTQH. Residues 216-236 traverse the membrane as a helical segment; sequence VAGLLFLMTGIFCTISLCTYA. Topologically, residues 237 to 267 are extracellular; the sequence is ASVAYELNRQPKFIYGLPSDVEHGYSWSLFC. Residues 268–288 form a helical membrane-spanning segment; that stretch reads AWCSLGLIVAAGCLCTAYPFI. The Cytoplasmic portion of the chain corresponds to 289–304; that stretch reads SRTKILHLKFARDSCV.

The protein belongs to the TMEM178 family.

It localises to the endoplasmic reticulum membrane. In terms of biological role, may act as a negative regulator of osteoclast differentiation. This chain is Transmembrane protein 178A (tmem178a), found in Xenopus laevis (African clawed frog).